Here is a 539-residue protein sequence, read N- to C-terminus: Phosphoenolpyruvate carboxykinase (ATP) (539 aa).

3 residues coordinate substrate: R64, Y206, and K212. ATP is bound by residues K212, H231, and 247-255; that span reads GLSGTGKTT. Mn(2+) is bound by residues K212 and H231. D268 lines the Mn(2+) pocket. ATP contacts are provided by residues E296, R332, 448–449, and T454; that span reads RI. R332 lines the substrate pocket.

This sequence belongs to the phosphoenolpyruvate carboxykinase (ATP) family. As to quaternary structure, monomer. Mn(2+) serves as cofactor.

It is found in the cytoplasm. It catalyses the reaction oxaloacetate + ATP = phosphoenolpyruvate + ADP + CO2. It participates in carbohydrate biosynthesis; gluconeogenesis. In terms of biological role, involved in the gluconeogenesis. Catalyzes the conversion of oxaloacetate (OAA) to phosphoenolpyruvate (PEP) through direct phosphoryl transfer between the nucleoside triphosphate and OAA. This chain is Phosphoenolpyruvate carboxykinase (ATP), found in Cronobacter sakazakii (strain ATCC BAA-894) (Enterobacter sakazakii).